A 131-amino-acid chain; its full sequence is Ribonuclease VapC4 (131 aa).

A PINc domain is found at 4-106; that stretch reads IVPDTNFLIY…IVATNDKELK (103 aa). Residues D7 and D102 each contribute to the Mg(2+) site.

Belongs to the PINc/VapC protein family. Requires Mg(2+) as cofactor.

Toxic component of a type II toxin-antitoxin (TA) system. An RNase. Its cognate antitoxin is VapB4. In Methanocaldococcus jannaschii (strain ATCC 43067 / DSM 2661 / JAL-1 / JCM 10045 / NBRC 100440) (Methanococcus jannaschii), this protein is Ribonuclease VapC4.